A 613-amino-acid chain; its full sequence is ADP-ribosylation factor-binding protein GGA2 (613 aa).

One can recognise a VHS domain in the interval 33–163 (ATDPSMSEQD…MLKKQGIIKQ (131 aa)). In terms of domain architecture, GAT spans 188–315 (DEEKSKLLTR…GVLLYKQVME (128 aa)). Residues 316 to 483 (GRVTFGNRVT…VFVPLESVKP (168 aa)) are unstructured hinge. Disordered regions lie at residues 389 to 414 (GQNC…NPSA) and 435 to 466 (SQKS…SPSS). The span at 399–414 (PSSSTLPGGGVQNPSA) shows a compositional bias: polar residues. A Phosphoserine modification is found at serine 400. One can recognise a GAE domain in the interval 484-605 (SSLPPLIVYD…SEVGEVKDFP (122 aa)).

The protein belongs to the GGA protein family. In terms of assembly, monomer. Interacts with NECAP1, TSG101, UBC and AFTPH/aftiphilin. Interacts with CNST. Interacts with GGA1 and GGA3. Binds to clathrin and activated ARFs, such as ARF1, ARF5 and ARF6. Binds RABEP1 and RABGEF1. Interacts with the type-I membrane proteins LRP3, M6PR/CD-MPR, IGF2R/CI-MPR and BACE1. Interacts (via N-terminal VHS domain) with SORL1/sorLA and SORT1 (via C-terminal cytosolic domain). Binds the accessory proteins CCDC91, P200, SYNRG, EPN4 and NECAP2. Interacts with ADRA2B. Interacts (via VHS domain) with PIK4B; the interaction is important for PIK4B location at the Golgi apparatus membrane. Ubiquitinated. As to expression, ubiquitously expressed.

The protein localises to the golgi apparatus. Its subcellular location is the trans-Golgi network membrane. It localises to the endosome membrane. The protein resides in the early endosome membrane. In terms of biological role, plays a role in protein sorting and trafficking between the trans-Golgi network (TGN) and endosomes. Mediates the ARF-dependent recruitment of clathrin to the TGN and binds ubiquitinated proteins and membrane cargo molecules with a cytosolic acidic cluster-dileucine (DXXLL) motif. Mediates export of the GPCR receptor ADRA2B to the cell surface. Regulates retrograde transport of phosphorylated form of BACE1 from endosomes to the trans-Golgi network. The protein is ADP-ribosylation factor-binding protein GGA2 (GGA2) of Homo sapiens (Human).